The following is a 58-amino-acid chain: Small ribosomal subunit protein bS21 (58 aa).

It belongs to the bacterial ribosomal protein bS21 family.

This chain is Small ribosomal subunit protein bS21, found in Latilactobacillus sakei subsp. sakei (strain 23K) (Lactobacillus sakei subsp. sakei).